The sequence spans 368 residues: MPNAIVAAEQYREIFLNQHPIMDVRAPIEFTRGAFPNSTNLPLMLDSEREKVGTCYKQSGQQAAIALGHSLVNGPIKQQRIEAWASYVKANPNAYLYCFRGGLRSQLTQQWLKEACVEVPYIQGGYKALRQYLIGVIEAAPTQQPLLSLSGMTGCGKTDFLLQRKEAVDLEGIANHRGSSFGKNIDPQPTQINFENQLAIALLQHQTSDAACLLLEDESFLIGRSALPQTFYNAMQAANVLVLEESDDARLERLRNEYVHKMYSGFCERLGAEAGFAAFSDYLLQSLVSIRKRLGGKQHQELQDLMQQALDQQINQNDTSLHLVWINLLLHKYYDPMYLYQLEKKSERVLFKGSHQAMHEWLDSYQTR.

The Rhodanese domain maps to 15–138; it reads FLNQHPIMDV…LRQYLIGVIE (124 aa). Cys98 serves as the catalytic S-selanylcysteine intermediate.

This sequence belongs to the SelU family. In terms of assembly, monomer.

It catalyses the reaction 5-methylaminomethyl-2-thiouridine(34) in tRNA + selenophosphate + (2E)-geranyl diphosphate + H2O + H(+) = 5-methylaminomethyl-2-selenouridine(34) in tRNA + (2E)-thiogeraniol + phosphate + diphosphate. The catalysed reaction is 5-methylaminomethyl-2-thiouridine(34) in tRNA + (2E)-geranyl diphosphate = 5-methylaminomethyl-S-(2E)-geranyl-thiouridine(34) in tRNA + diphosphate. It carries out the reaction 5-methylaminomethyl-S-(2E)-geranyl-thiouridine(34) in tRNA + selenophosphate + H(+) = 5-methylaminomethyl-2-(Se-phospho)selenouridine(34) in tRNA + (2E)-thiogeraniol. The enzyme catalyses 5-methylaminomethyl-2-(Se-phospho)selenouridine(34) in tRNA + H2O = 5-methylaminomethyl-2-selenouridine(34) in tRNA + phosphate. Its function is as follows. Involved in the post-transcriptional modification of the uridine at the wobble position (U34) of tRNA(Lys), tRNA(Glu) and tRNA(Gln). Catalyzes the conversion of 2-thiouridine (S2U-RNA) to 2-selenouridine (Se2U-RNA). Acts in a two-step process involving geranylation of 2-thiouridine (S2U) to S-geranyl-2-thiouridine (geS2U) and subsequent selenation of the latter derivative to 2-selenouridine (Se2U) in the tRNA chain. This Shewanella baltica (strain OS223) protein is tRNA 2-selenouridine synthase.